The following is a 222-amino-acid chain: Glutathione S-transferase A6 (222 aa).

In terms of domain architecture, GST N-terminal spans 3–83 (EKPLFHYDEA…YFSSKYNLYG (81 aa)). Glutathione is bound by residues tyrosine 9, arginine 45, 54–55 (QV), and 67–68 (QT). The GST C-terminal domain maps to 85 to 208 (DMKERALIDM…QPGSQRQPPV (124 aa)).

The protein belongs to the GST superfamily. Alpha family. Homodimer or heterodimer of GSTA1 and GSTA2.

It localises to the cytoplasm. The enzyme catalyses RX + glutathione = an S-substituted glutathione + a halide anion + H(+). Functionally, conjugation of reduced glutathione to a wide number of exogenous and endogenous hydrophobic electrophiles. This is Glutathione S-transferase A6 (Gsta6) from Rattus norvegicus (Rat).